We begin with the raw amino-acid sequence, 959 residues long: Isoleucine--tRNA ligase (959 aa).

Residues 66–76 (PYANGDIHIGH) carry the 'HIGH' region motif. L-isoleucyl-5'-AMP is bound at residue Glu-592. A 'KMSKS' region motif is present at residues 633–637 (KMSKS). Lys-636 is a binding site for ATP. Positions 922, 925, 942, and 945 each coordinate Zn(2+).

This sequence belongs to the class-I aminoacyl-tRNA synthetase family. IleS type 1 subfamily. Monomer. The cofactor is Zn(2+).

The protein localises to the cytoplasm. It carries out the reaction tRNA(Ile) + L-isoleucine + ATP = L-isoleucyl-tRNA(Ile) + AMP + diphosphate. Functionally, catalyzes the attachment of isoleucine to tRNA(Ile). As IleRS can inadvertently accommodate and process structurally similar amino acids such as valine, to avoid such errors it has two additional distinct tRNA(Ile)-dependent editing activities. One activity is designated as 'pretransfer' editing and involves the hydrolysis of activated Val-AMP. The other activity is designated 'posttransfer' editing and involves deacylation of mischarged Val-tRNA(Ile). This chain is Isoleucine--tRNA ligase, found in Cupriavidus metallidurans (strain ATCC 43123 / DSM 2839 / NBRC 102507 / CH34) (Ralstonia metallidurans).